A 294-amino-acid polypeptide reads, in one-letter code: Acetylglutamate kinase (294 aa).

Substrate is bound by residues 63–64, Arg85, and Asn188; that span reads GG.

The protein belongs to the acetylglutamate kinase family. ArgB subfamily.

It localises to the cytoplasm. It carries out the reaction N-acetyl-L-glutamate + ATP = N-acetyl-L-glutamyl 5-phosphate + ADP. It participates in amino-acid biosynthesis; L-arginine biosynthesis; N(2)-acetyl-L-ornithine from L-glutamate: step 2/4. In terms of biological role, catalyzes the ATP-dependent phosphorylation of N-acetyl-L-glutamate. In Methanococcus maripaludis (strain C7 / ATCC BAA-1331), this protein is Acetylglutamate kinase.